We begin with the raw amino-acid sequence, 60 residues long: Large ribosomal subunit protein uL30 (60 aa).

This sequence belongs to the universal ribosomal protein uL30 family. As to quaternary structure, part of the 50S ribosomal subunit.

The chain is Large ribosomal subunit protein uL30 from Oceanobacillus iheyensis (strain DSM 14371 / CIP 107618 / JCM 11309 / KCTC 3954 / HTE831).